A 258-amino-acid polypeptide reads, in one-letter code: Global transcriptional regulator CodY (258 aa).

The GAF domain stretch occupies residues 1-156 (MSSLLDKTRM…SATIIGLEIL (156 aa)). A DNA-binding region (H-T-H motif) is located at residues 204 to 223 (ASKIADKVGITRSVIVNALR).

The protein belongs to the CodY family.

It localises to the cytoplasm. In terms of biological role, DNA-binding global transcriptional regulator which is involved in the adaptive response to starvation and acts by directly or indirectly controlling the expression of numerous genes in response to nutrient availability. During rapid exponential growth, CodY is highly active and represses genes whose products allow adaptation to nutrient depletion. This is Global transcriptional regulator CodY from Clostridium botulinum (strain Okra / Type B1).